Consider the following 90-residue polypeptide: Bombyxin D-1 (90 aa).

Positions 1–18 are cleaved as a signal peptide; the sequence is MKLLGFFLSWVSVCAIVS. Cystine bridges form between Cys27-Cys77, Cys39-Cys90, and Cys76-Cys81. Residues 48-68 constitute a propeptide, c peptide like; sequence SVAHYAGYGWPLLPSLSEERG.

This sequence belongs to the insulin family. In terms of assembly, heterodimer of a B chain and an A chain linked by two disulfide bonds.

The protein resides in the secreted. Brain peptide responsible for activation of prothoracic glands to produce ecdysone in insects. This is Bombyxin D-1 (BBXD1) from Bombyx mori (Silk moth).